Here is a 300-residue protein sequence, read N- to C-terminus: MATTKKNEDVEFVRTGYGKDMVKVLHIQRDGKYHSIKEVATSVQLTLSSKQDYVYGDNSDIIPTDTIKNTVHVLAKFKGIKSIEVFAMNICEHFLSSFNHVVRVHVYVEEVPWKRLEKNGVQHVHAFIHTPTGTHFCEVEQRRSGLPVIHSGIKDLKVLKTTQSGFEGFIKDQFTTLPEVKDRCFATQVYCKWRYQHSQDVDFEATWDIVRDTVLEKFAGPYDKGEYSPSVQKTLYDIQVLTLSRVPQIEDMEISLPNIHYFNIDMSKMGLINKEEVLLPLDNPYGKITGTVKRKLSSRL.

N-acetylalanine is present on alanine 2. 2 positions are modified to N6-acetyllysine; alternate: lysine 6 and lysine 19. 2 positions are modified to N6-succinyllysine; alternate: lysine 6 and lysine 19. Lysine 19 acts as the Charge relay system in catalysis. 2 positions are modified to N6-acetyllysine: lysine 23 and lysine 32. Residues serine 35 and serine 59 each carry the phosphoserine modification. The Charge relay system role is filled by threonine 64. Residues threonine 64 and aspartate 65 each contribute to the urate site. N6-acetyllysine occurs at positions 114, 118, and 160. A urate-binding site is contributed by phenylalanine 166. An N6-acetyllysine mark is found at lysine 171 and lysine 181. A urate-binding site is contributed by arginine 183. Lysine 217 and lysine 224 each carry N6-acetyllysine; alternate. An N6-succinyllysine; alternate mark is found at lysine 217 and lysine 224. Serine 228 is modified (phosphoserine). The urate site is built by valine 231, glutamine 232, and asparagine 258. The Charge relay system role is filled by histidine 260. Residue lysine 274 is modified to N6-acetyllysine. Tyrosine 285 is subject to Phosphotyrosine. Positions 298–300 (SRL) match the Microbody targeting signal motif.

This sequence belongs to the uricase family.

The protein resides in the peroxisome. The catalysed reaction is urate + O2 + H2O = 5-hydroxyisourate + H2O2. It participates in purine metabolism; urate degradation; (S)-allantoin from urate: step 1/3. Functionally, catalyzes the oxidation of uric acid to 5-hydroxyisourate, which is further processed to form (S)-allantoin. The protein is Uricase (UOX) of Oryctolagus cuniculus (Rabbit).